Reading from the N-terminus, the 316-residue chain is Ribosomal RNA small subunit methyltransferase H (316 aa).

S-adenosyl-L-methionine contacts are provided by residues 32–34 (AGH), D52, F79, D100, and Q107.

It belongs to the methyltransferase superfamily. RsmH family.

The protein resides in the cytoplasm. It catalyses the reaction cytidine(1402) in 16S rRNA + S-adenosyl-L-methionine = N(4)-methylcytidine(1402) in 16S rRNA + S-adenosyl-L-homocysteine + H(+). Specifically methylates the N4 position of cytidine in position 1402 (C1402) of 16S rRNA. The sequence is that of Ribosomal RNA small subunit methyltransferase H from Lysinibacillus sphaericus (strain C3-41).